The sequence spans 325 residues: MNMTKTAMLIALMTVMFMSIGYLLGGGGGMMIALVIAVAMNLFGYWNSDKMVLRMYNAQEVDERSAPEYYRMVSGLAANAGLPMPKVYIIHEDQPNAFATGRNPENAAVAATTGLLNRLSPEEVAGVMAHELAHVQNRDTLTMTIVATLAGAISMLGNFAFFLGGNRENGNGVMGVVGTLLAMIVAPFAAMIVQMAVSRTREYAADKRGAEICGNPLWLSSALGKIARGAKVIPNEEAEHNPATAHMFIINPLSGRGADNLFSTHPDTDNRIAALEQMAAEMGIRSAAMTARAAAPSQNSGPWGQRSDNAGGNSNGGSRYRGPWS.

A helical transmembrane segment spans residues 20–40 (IGYLLGGGGGMMIALVIAVAM). His-130 is a Zn(2+) binding site. Glu-131 is an active-site residue. His-134 is a Zn(2+) binding site. Transmembrane regions (helical) follow at residues 145-165 (IVAT…FLGG) and 173-193 (VMGV…AMIV). Glu-202 serves as a coordination point for Zn(2+). The tract at residues 288–325 (AMTARAAAPSQNSGPWGQRSDNAGGNSNGGSRYRGPWS) is disordered. Residues 306–325 (RSDNAGGNSNGGSRYRGPWS) are compositionally biased toward low complexity.

It belongs to the peptidase M48B family. The cofactor is Zn(2+).

It localises to the cell inner membrane. In Brucella suis (strain ATCC 23445 / NCTC 10510), this protein is Protease HtpX homolog.